A 358-amino-acid polypeptide reads, in one-letter code: DNA methyltransferase CcrM (358 aa).

The segment at 1–260 (MKFGPETIIH…AKVVPIAPED (260 aa)) is methyltransferase. 2 consecutive DNA-binding regions (target strand DNA) follow at residues 31–34 (DPPY) and 39–45 (GGDLLRP). DNA-binding regions (non-target strand DNA) lie at residues 93-94 (YH) and 109-110 (WI). His-94 provides a ligand contact to dsDNA. A DNA-binding region (target strand DNA) is located at residues 122–132 (MPNFKGTRFAN). Residues 153-157 (YDALK) constitute a DNA-binding region (non-target strand DNA). Positions 164 and 179 each coordinate dsDNA. Positions 187–193 (KAHPTQK) form a DNA-binding region, target strand DNA. Residues 259–355 (EDLDVMGSKR…IDVLRAQVRA (97 aa)) enclose the RAMA domain. Residues 261 to 270 (LDVMGSKRAE) are linker. Positions 267 and 272 each coordinate dsDNA. The tract at residues 272-358 (RVPFGTIVEA…LRAQVRAGMN (87 aa)) is non-specific DNA-binding. 2 consecutive DNA-binding regions (non-target strand DNA) follow at residues 315 to 317 (SIH) and 330 to 332 (NGW). Arg-350 contacts dsDNA.

This sequence belongs to the N(4)/N(6)-methyltransferase family. In terms of assembly, homodimer. Rapidly degraded by Lon protease prior to cell division.

The enzyme catalyses a 2'-deoxyadenosine in DNA + S-adenosyl-L-methionine = an N(6)-methyl-2'-deoxyadenosine in DNA + S-adenosyl-L-homocysteine + H(+). Functionally, a beta subtype methylase that recognizes the double-stranded sequence 5'-GANTC-3' and methylates non-modifed A-2 on the hemimethylated, post-replicative DNA. Opens a bubble in the DNA at the recognition site, allowing precise recognition of the sequence and ensuring enzyme specificity. Functions only in the predivisional cell. Responsible for 5'-GANTC-3' methylation in the cell; methylation of hemimethylated sites generated after replication fork passage occurs late in the predivisional cell, near completion of chromosome replication but prior to cell division. Contributes to the accurate cell-cycle control of DNA replication and cellular morphology. This chain is DNA methyltransferase CcrM (ccrMIM), found in Caulobacter vibrioides (strain ATCC 19089 / CIP 103742 / CB 15) (Caulobacter crescentus).